We begin with the raw amino-acid sequence, 558 residues long: ATP synthase subunit alpha (558 aa).

172 to 179 contacts ATP; sequence GDRKTGKT. Residues 536–558 form a disordered region; it reads ESVKVHQAIPAKTSEKSKNSTPR. Positions 548-558 are enriched in basic and acidic residues; that stretch reads TSEKSKNSTPR.

This sequence belongs to the ATPase alpha/beta chains family. In terms of assembly, F-type ATPases have 2 components, CF(1) - the catalytic core - and CF(0) - the membrane proton channel. CF(1) has five subunits: alpha(3), beta(3), gamma(1), delta(1), epsilon(1). CF(0) has three main subunits: a(1), b(2) and c(9-12). The alpha and beta chains form an alternating ring which encloses part of the gamma chain. CF(1) is attached to CF(0) by a central stalk formed by the gamma and epsilon chains, while a peripheral stalk is formed by the delta and b chains.

It is found in the cell membrane. The enzyme catalyses ATP + H2O + 4 H(+)(in) = ADP + phosphate + 5 H(+)(out). Its function is as follows. Produces ATP from ADP in the presence of a proton gradient across the membrane. The alpha chain is a regulatory subunit. In Mycobacterium leprae (strain Br4923), this protein is ATP synthase subunit alpha.